Here is a 287-residue protein sequence, read N- to C-terminus: Large ribosomal subunit protein uL2 (287 aa).

A disordered region spans residues 221–287 (RGSVMNPCDH…SKRSRGGRDS (67 aa)). A compositionally biased stretch (basic residues) spans 258 to 287 (KTRKRNKPSNRFVLRKRRRTSKRSRGGRDS).

The protein belongs to the universal ribosomal protein uL2 family. Part of the 50S ribosomal subunit. Forms a bridge to the 30S subunit in the 70S ribosome.

Functionally, one of the primary rRNA binding proteins. Required for association of the 30S and 50S subunits to form the 70S ribosome, for tRNA binding and peptide bond formation. It has been suggested to have peptidyltransferase activity; this is somewhat controversial. Makes several contacts with the 16S rRNA in the 70S ribosome. This Prochlorococcus marinus (strain MIT 9313) protein is Large ribosomal subunit protein uL2.